Reading from the N-terminus, the 66-residue chain is Large ribosomal subunit protein uL29 (66 aa).

This sequence belongs to the universal ribosomal protein uL29 family.

In Borrelia duttonii (strain Ly), this protein is Large ribosomal subunit protein uL29.